A 371-amino-acid polypeptide reads, in one-letter code: Macronuclear solute carrier homolog CR-MSC (371 aa).

3 Solcar repeats span residues 16-111 (RMNY…FYDK), 120-208 (ARPD…CKEN), and 215-304 (PHWI…LSQF). 6 helical membrane-spanning segments follow: residues 22-42 (FAAA…LDMV), 89-109 (TFFF…GYFY), 126-146 (VAAG…IDIV), 184-204 (AGAN…IYDW), 221-241 (LWGT…FDMI), and 281-301 (FGSF…ICYL).

It belongs to the mitochondrial carrier (TC 2.A.29) family.

It localises to the membrane. In Oxytricha trifallax (Sterkiella histriomuscorum), this protein is Macronuclear solute carrier homolog CR-MSC.